Here is a 322-residue protein sequence, read N- to C-terminus: N-acetyl-gamma-glutamyl-phosphate reductase 2 (322 aa).

The active site involves Cys-117.

The protein belongs to the NAGSA dehydrogenase family. Type 2 subfamily.

The protein resides in the cytoplasm. The enzyme catalyses N-acetyl-L-glutamate 5-semialdehyde + phosphate + NADP(+) = N-acetyl-L-glutamyl 5-phosphate + NADPH + H(+). It participates in amino-acid biosynthesis; L-arginine biosynthesis; N(2)-acetyl-L-ornithine from L-glutamate: step 3/4. In terms of biological role, catalyzes the NADPH-dependent reduction of N-acetyl-5-glutamyl phosphate to yield N-acetyl-L-glutamate 5-semialdehyde. This chain is N-acetyl-gamma-glutamyl-phosphate reductase 2, found in Nostoc sp. (strain PCC 7120 / SAG 25.82 / UTEX 2576).